A 667-amino-acid polypeptide reads, in one-letter code: UvrABC system protein B (667 aa).

The 172-residue stretch at 24 to 195 (EGLRRGDRFQ…SSGGVFHLRG (172 aa)) folds into the Helicase ATP-binding domain. 37–44 (GVTGSGKT) contributes to the ATP binding site. The Beta-hairpin signature appears at 90-113 (YYDYYQPEAYIPTKDLYIEKDADI). The region spanning 428–581 (QVDDFIEEVQ…QLMYNIEHDI (154 aa)) is the Helicase C-terminal domain. Residues 626–661 (EEYLALLEEEMWRASSELRYEDAAMLRDEMLRIKRE) enclose the UVR domain.

Belongs to the UvrB family. Forms a heterotetramer with UvrA during the search for lesions. Interacts with UvrC in an incision complex.

It localises to the cytoplasm. Its function is as follows. The UvrABC repair system catalyzes the recognition and processing of DNA lesions. A damage recognition complex composed of 2 UvrA and 2 UvrB subunits scans DNA for abnormalities. Upon binding of the UvrA(2)B(2) complex to a putative damaged site, the DNA wraps around one UvrB monomer. DNA wrap is dependent on ATP binding by UvrB and probably causes local melting of the DNA helix, facilitating insertion of UvrB beta-hairpin between the DNA strands. Then UvrB probes one DNA strand for the presence of a lesion. If a lesion is found the UvrA subunits dissociate and the UvrB-DNA preincision complex is formed. This complex is subsequently bound by UvrC and the second UvrB is released. If no lesion is found, the DNA wraps around the other UvrB subunit that will check the other stand for damage. In Kosmotoga olearia (strain ATCC BAA-1733 / DSM 21960 / TBF 19.5.1), this protein is UvrABC system protein B.